A 1375-amino-acid polypeptide reads, in one-letter code: BNI1-related protein 1 (1375 aa).

The region spanning 94 to 490 (CMPQDASLVE…YLIDSFQVST (397 aa)) is the GBD/FH3 domain. Residues 520–601 (QSDEIARRAV…ITTHQRLYDQ (82 aa)) are a coiled coil. At serine 621 the chain carries Phosphoserine. One can recognise an FH1 domain in the interval 659 to 851 (SSYLTDANNE…LVTPPAPPLP (193 aa)). The interval 661-684 (YLTDANNENESQNESEDKSKDSLF) is disordered. Serine 751 carries the phosphoserine modification. Disordered stretches follow at residues 764–785 (KLPQLPPPPPPPPPPPLPQSLL), 817–839 (AVPPPPPPPPLPESLSMNKGPSN), and 1285–1309 (KSLLDMRTSSNKKSNGSDENDGEKV). Pro residues-rich tracts occupy residues 767–781 (QLPPPPPPPPPPPLP) and 818–828 (VPPPPPPPPLP). One can recognise an FH2 domain in the interval 868 to 1290 (DLKPPPTEKR…YEQRKSLLDM (423 aa)). The region spanning 1302 to 1336 (DENDGEKVNRDAVDLLISKLREVKKDPEPLRRRKS) is the DAD domain.

It belongs to the formin homology family. BNI1 subfamily. Interacts with profilin at the FH1 domain.

Functionally, may organize microtubules by mediating spindle positioning and movement in the budding process. Potential target of the RHO family members. In Saccharomyces cerevisiae (strain ATCC 204508 / S288c) (Baker's yeast), this protein is BNI1-related protein 1 (BNR1).